The following is a 341-amino-acid chain: uncharacterized protein (341 aa).

It belongs to the cycloisomerase 2 family.

This is an uncharacterized protein from Lactococcus lactis subsp. lactis (strain IL1403) (Streptococcus lactis).